Reading from the N-terminus, the 317-residue chain is Melanocyte-stimulating hormone receptor (317 aa).

At 1–37 (MPMQEPQRRLLGPFNSTRTGAPHLELSANQTGPWCLH) the chain is on the extracellular side. 2 N-linked (GlcNAc...) asparagine glycosylation sites follow: asparagine 15 and asparagine 29. A helical transmembrane segment spans residues 38–63 (VSIPDGLFLSLGLVSLVENVLVVISI). The Cytoplasmic segment spans residues 64–72 (AKNQNLHSP). The helical transmembrane segment at 73 to 93 (MYYFICCLALSDLLVSVSIVL) threads the bilayer. Topologically, residues 94 to 118 (ETTLILVLEAGALATRVTVVQQLDN) are extracellular. The helical transmembrane segment at 119-140 (VIDVLICASMVSSLCFLGAIAV) threads the bilayer. The Cytoplasmic segment spans residues 141 to 163 (DRYISIFYALRYHSIVTLPRARW). A helical membrane pass occupies residues 164 to 183 (AIVAIWVASISSSTLFVAYY). Residues 184–191 (NHTAVLLC) are Extracellular-facing. A helical transmembrane segment spans residues 192–211 (LVTFFLATLALMVVLYVHML). Residues 212 to 240 (ARAHQHAQAIAQLHKRQHLVHQGFRLKGA) lie on the Cytoplasmic side of the membrane. Residues 241–266 (ATLTILLGIFFLCWGPFFLYLTLIVL) form a helical membrane-spanning segment. Residues 267 to 279 (CPKHPTCGCFFKN) are Extracellular-facing. Residues 280–300 (LNLFLALIIFNSIVDPLIYAF) traverse the membrane as a helical segment. At 301–317 (RSQELRMTLKEVLLCSW) the chain is on the cytoplasmic side. The S-palmitoyl cysteine moiety is linked to residue cysteine 315.

The protein belongs to the G-protein coupled receptor 1 family. As to quaternary structure, interacts with MGRN1, but does not undergo MGRN1-mediated ubiquitination; this interaction competes with GNAS-binding and thus inhibits agonist-induced cAMP production. Interacts with OPN3; the interaction results in a decrease in MC1R-mediated cAMP signaling and ultimately a decrease in melanin production in melanocytes.

Its subcellular location is the cell membrane. Its function is as follows. Receptor for MSH (alpha, beta and gamma) and ACTH. The activity of this receptor is mediated by G proteins which activate adenylate cyclase. Mediates melanogenesis, the production of eumelanin (black/brown) and phaeomelanin (red/yellow), via regulation of cAMP signaling in melanocytes. The chain is Melanocyte-stimulating hormone receptor (MC1R) from Chaetodipus penicillatus (Desert pocket mouse).